The primary structure comprises 500 residues: ATP synthase subunit alpha (500 aa).

An ATP-binding site is contributed by 169 to 176; sequence GDRQTGKT.

The protein belongs to the ATPase alpha/beta chains family. In terms of assembly, F-type ATPases have 2 components, CF(1) - the catalytic core - and CF(0) - the membrane proton channel. CF(1) has five subunits: alpha(3), beta(3), gamma(1), delta(1), epsilon(1). CF(0) has three main subunits: a(1), b(2) and c(9-12). The alpha and beta chains form an alternating ring which encloses part of the gamma chain. CF(1) is attached to CF(0) by a central stalk formed by the gamma and epsilon chains, while a peripheral stalk is formed by the delta and b chains.

The protein resides in the cell membrane. The catalysed reaction is ATP + H2O + 4 H(+)(in) = ADP + phosphate + 5 H(+)(out). Functionally, produces ATP from ADP in the presence of a proton gradient across the membrane. The alpha chain is a regulatory subunit. This is ATP synthase subunit alpha from Lactococcus lactis subsp. lactis (strain IL1403) (Streptococcus lactis).